The chain runs to 199 residues: MTFGDWPPQRRIGLTGGIASGKSSVAALLEKRGCPVLDADVYAREALATDTSASKAVVARYGKRVQKDGTSDIDRAELAAIVFNDPNERSWLEQLVHPIVQRRFDDALRSLPDAPIVILMIPLLFEAGLEKWCSEIWVVRCTALQQRERLMARNNCTEAEATQRIAAQWPIDIKVQRADSVINNSGRIDDLHDQLDALL.

A DPCK domain is found at 11–199; the sequence is RIGLTGGIAS…DLHDQLDALL (189 aa). Residue 19-24 coordinates ATP; it reads ASGKSS.

Belongs to the CoaE family.

The protein localises to the cytoplasm. It catalyses the reaction 3'-dephospho-CoA + ATP = ADP + CoA + H(+). It functions in the pathway cofactor biosynthesis; coenzyme A biosynthesis; CoA from (R)-pantothenate: step 5/5. Its function is as follows. Catalyzes the phosphorylation of the 3'-hydroxyl group of dephosphocoenzyme A to form coenzyme A. The sequence is that of Dephospho-CoA kinase from Synechococcus sp. (strain CC9902).